The chain runs to 170 residues: Histone H1.9 (170 aa).

The 75-residue stretch at 34 to 108 (RKPTMSYVIL…GASGSLCLCK (75 aa)) folds into the H15 domain. Ser-56 is subject to Phosphoserine. Residues 118 to 140 (AKRCQDRQKSQKPQKPGQRESEP) are disordered.

It belongs to the histone H1/H5 family. In terms of tissue distribution, expressed exclusively in the testis by haploid germ cells (at protein level).

Its subcellular location is the nucleus. It is found in the chromosome. DNA-binding protein that may be implicated in chromatin remodeling and/or transcriptional regulation during spermiogenesis, the process of spermatid maturation into spermatozoa. This Mus musculus (Mouse) protein is Histone H1.9.